Consider the following 217-residue polypeptide: Thiamine-phosphate synthase (217 aa).

Residues 41 to 45 and Asn76 each bind 4-amino-2-methyl-5-(diphosphooxymethyl)pyrimidine; that span reads QYRDK. Mg(2+)-binding residues include Asp77 and Asp96. Ser115 serves as a coordination point for 4-amino-2-methyl-5-(diphosphooxymethyl)pyrimidine. 142–144 provides a ligand contact to 2-[(2R,5Z)-2-carboxy-4-methylthiazol-5(2H)-ylidene]ethyl phosphate; the sequence is SPS. Lys145 contributes to the 4-amino-2-methyl-5-(diphosphooxymethyl)pyrimidine binding site. Residues Gly172 and 192-193 each bind 2-[(2R,5Z)-2-carboxy-4-methylthiazol-5(2H)-ylidene]ethyl phosphate; that span reads IS.

It belongs to the thiamine-phosphate synthase family. Requires Mg(2+) as cofactor.

It carries out the reaction 2-[(2R,5Z)-2-carboxy-4-methylthiazol-5(2H)-ylidene]ethyl phosphate + 4-amino-2-methyl-5-(diphosphooxymethyl)pyrimidine + 2 H(+) = thiamine phosphate + CO2 + diphosphate. The catalysed reaction is 2-(2-carboxy-4-methylthiazol-5-yl)ethyl phosphate + 4-amino-2-methyl-5-(diphosphooxymethyl)pyrimidine + 2 H(+) = thiamine phosphate + CO2 + diphosphate. It catalyses the reaction 4-methyl-5-(2-phosphooxyethyl)-thiazole + 4-amino-2-methyl-5-(diphosphooxymethyl)pyrimidine + H(+) = thiamine phosphate + diphosphate. The protein operates within cofactor biosynthesis; thiamine diphosphate biosynthesis; thiamine phosphate from 4-amino-2-methyl-5-diphosphomethylpyrimidine and 4-methyl-5-(2-phosphoethyl)-thiazole: step 1/1. Condenses 4-methyl-5-(beta-hydroxyethyl)thiazole monophosphate (THZ-P) and 2-methyl-4-amino-5-hydroxymethyl pyrimidine pyrophosphate (HMP-PP) to form thiamine monophosphate (TMP). This Acidithiobacillus ferrooxidans (strain ATCC 23270 / DSM 14882 / CIP 104768 / NCIMB 8455) (Ferrobacillus ferrooxidans (strain ATCC 23270)) protein is Thiamine-phosphate synthase.